The chain runs to 189 residues: ATP-dependent protease subunit HslV (189 aa).

Residue Thr-12 is part of the active site. Positions 172, 175, and 178 each coordinate Na(+).

This sequence belongs to the peptidase T1B family. HslV subfamily. A double ring-shaped homohexamer of HslV is capped on each side by a ring-shaped HslU homohexamer. The assembly of the HslU/HslV complex is dependent on binding of ATP.

It is found in the cytoplasm. It catalyses the reaction ATP-dependent cleavage of peptide bonds with broad specificity.. Allosterically activated by HslU binding. In terms of biological role, protease subunit of a proteasome-like degradation complex believed to be a general protein degrading machinery. The protein is ATP-dependent protease subunit HslV of Ehrlichia canis (strain Jake).